Consider the following 242-residue polypeptide: LexA repressor (242 aa).

The H-T-H motif DNA-binding region spans 26 to 46 (FEEMKAALNLKSKSGIHRLIS). Residues serine 163 and lysine 201 each act as for autocatalytic cleavage activity in the active site.

The protein belongs to the peptidase S24 family. As to quaternary structure, homodimer.

The catalysed reaction is Hydrolysis of Ala-|-Gly bond in repressor LexA.. In terms of biological role, represses a number of genes involved in the response to DNA damage (SOS response), including recA and lexA. In the presence of single-stranded DNA, RecA interacts with LexA causing an autocatalytic cleavage which disrupts the DNA-binding part of LexA, leading to derepression of the SOS regulon and eventually DNA repair. This Granulibacter bethesdensis (strain ATCC BAA-1260 / CGDNIH1) protein is LexA repressor.